The sequence spans 454 residues: MTTDYSNILKTIKPDGDEYRRVMELSDSLVECLNGLAEEQGIDAEAVLVGSVAKGTWLSGAADIDIFIHFPLTTPEDELKESGLRLGYGCIERFGGEAEERYASHPYVTGYIDGYEVDFVPCYRIDDASMLRSAVDRTILHTRYIQENLRDEQRDDVLLLKQFMKSTGTYGSEFRVGGFAGYLAELLVLRYGDFEGVLEGALQWRPGYIIDLEGHGTGKGFEDPLVVVDPVDRNRNVAAALTLQRMAEFVTASLNFLGNPSPEYFQPPSYSTDAAEITGTLSCRGSRVIVISTGVPDVPSDALYPQLRKTLDSVVKNLEAEGFSVLGADYWSDESKSTFMVLEMDVWELPSYLKRYGPPVWSRRHRERFLRKHERVWVEGSRLTIESPRRHRSAVSYLRDLLSKPDRLRMGKHIGVEIRRGFSVDLLDDVIGEAEKEFLEFMDAFLNPWKALER.

Positions 51 and 54 each coordinate ATP. CTP is bound by residues Ser51 and Lys54. Mg(2+)-binding residues include Asp63, Asp65, and Asp118. 3 residues coordinate ATP: His141, Lys161, and Tyr170. Residues His141, Lys161, and Tyr170 each contribute to the CTP site.

This sequence belongs to the tRNA nucleotidyltransferase/poly(A) polymerase family. Archaeal CCA-adding enzyme subfamily. As to quaternary structure, homodimer. Mg(2+) serves as cofactor.

The catalysed reaction is a tRNA precursor + 2 CTP + ATP = a tRNA with a 3' CCA end + 3 diphosphate. It carries out the reaction a tRNA with a 3' CCA end + 2 CTP + ATP = a tRNA with a 3' CCACCA end + 3 diphosphate. Its function is as follows. Catalyzes the addition and repair of the essential 3'-terminal CCA sequence in tRNAs without using a nucleic acid template. Adds these three nucleotides in the order of C, C, and A to the tRNA nucleotide-73, using CTP and ATP as substrates and producing inorganic pyrophosphate. tRNA 3'-terminal CCA addition is required both for tRNA processing and repair. Also involved in tRNA surveillance by mediating tandem CCA addition to generate a CCACCA at the 3' terminus of unstable tRNAs. While stable tRNAs receive only 3'-terminal CCA, unstable tRNAs are marked with CCACCA and rapidly degraded. In Methanothermobacter thermautotrophicus (strain ATCC 29096 / DSM 1053 / JCM 10044 / NBRC 100330 / Delta H) (Methanobacterium thermoautotrophicum), this protein is CCA-adding enzyme.